We begin with the raw amino-acid sequence, 2208 residues long: RNA-directed RNA polymerase L (2208 aa).

The tract at residues 26–284 (KEALLSQVEV…SHAGTTVPEC (259 aa)) is endonuclease. Mn(2+) contacts are provided by E51, D89, and E102. K115 is an active-site residue. The RdRp catalytic domain occupies 1172-1370 (CDMKMAVNNG…FLSSKLNKFV (199 aa)). D1330 serves as a coordination point for Mg(2+).

It belongs to the Bunyavirales RNA polymerase family. In terms of assembly, homomultimer; the oligomeric structure is essential for the polymerase activity. Interacts with nucleoprotein N. Interacts with protein Z; this interaction inhibits viral transcription and replication, Z partially blocks the product exit tunnel for the releasing nascent RNA product. Mn(2+) serves as cofactor. Requires Mg(2+) as cofactor.

The protein localises to the virion. The protein resides in the host cytoplasm. It catalyses the reaction RNA(n) + a ribonucleoside 5'-triphosphate = RNA(n+1) + diphosphate. RNA-dependent RNA polymerase, which is responsible for the replication and transcription of the viral RNA genome using antigenomic RNA as an intermediate. During transcription, synthesizes subgenomic RNAs and assures their capping by a cap-snatching mechanism, which involves the endonuclease activity cleaving the host capped pre-mRNAs. These short capped RNAs are then used as primers for viral transcription. The 3'-end of subgenomic mRNAs molecules are heterogeneous and not polyadenylated. The replicase function is to direct synthesis of antigenomic and genomic RNA which are encapsidated and non capped. As a consequence of the use of the same enzyme for both transcription and replication, these mechanisms need to be well coordinated. These processes may be regulated by proteins N and Z in a dose-dependent manner. Z protein inhibits the viral polymerase L und thus the viral transcription and RNA synthesis. This chain is RNA-directed RNA polymerase L, found in Hylaeamys megacephalus (Large-headed rice rat).